The primary structure comprises 627 residues: Putative ankyrin repeat protein L122 (627 aa).

12 ANK repeats span residues 61–94, 98–130, 153–186, 190–223, 228–259, 263–296, 300–333, 337–370, 374–407, 411–444, 448–480, and 491–523; these read KGWT…DVHI, KGRT…DINS, HACY…DPNI, YGKT…NANH, AETV…DINH, IGFT…NINL, DGFT…DIND, NNVT…DLEI, YDWT…NVNV, LGHT…NPNL, DKNT…DSNT, and REYN…NYSD.

The protein is Putative ankyrin repeat protein L122 of Acanthamoeba polyphaga (Amoeba).